The primary structure comprises 1275 residues: Inner capsid protein lambda-1 (1275 aa).

Basic residues predominate over residues Met-1–Ser-12. Residues Met-1–Pro-149 form a disordered region. 2 stretches are compositionally biased toward basic and acidic residues: residues Asp-18–Asn-35 and Asn-75–Lys-117. A compositionally biased stretch (polar residues) spans Ala-118–Pro-149. The C2H2-type zinc finger occupies Tyr-181 to His-203.

It belongs to the turreted BTV-fold inner capsid family. Homodecamer; each decamer is made up of two conformers of VP2, called VP2A and VP2B. 12 homodecamers assemble to form an icosahedral capsid. Interacts with protein mu-NS; in viral inclusions. Mg(2+) serves as cofactor. It depends on Mn(2+) as a cofactor.

Its subcellular location is the virion. The catalysed reaction is ATP + H2O = ADP + phosphate + H(+). In terms of biological role, inner capsid protein that self-assembles to form an icosahedral capsid with a T=2 symmetry, which consists of 120 copies of VP2, with channels at each of its five-fold vertices. This capsid constitutes the innermost concentric layer of the viral mature particle. Displays NTPase, RNA 5'-triphosphatase (RTPase) and RNA helicase activities and probably participates in transcription of the viral genome. Helicase activity might be involved in unwinding or reannealing dsRNA during RNA synthesis. RTPase enzymatic activity represents the first step in RNA capping, which yields a 5'-diphosphorylated plus-strand RNA. This chain is Inner capsid protein lambda-1 (L3), found in Reovirus type 1 (strain Lang) (T1L).